The primary structure comprises 56 residues: MGVPQRRQSHARKNKRRSEWRKIDKPGLVECPQCHELKMPHRACLNCGYYKSNKVM.

The tract at residues 1 to 21 is disordered; the sequence is MGVPQRRQSHARKNKRRSEWR. Basic residues predominate over residues 7–19; that stretch reads RQSHARKNKRRSE.

This sequence belongs to the bacterial ribosomal protein bL32 family.

The chain is Large ribosomal subunit protein bL32 from Syntrophomonas wolfei subsp. wolfei (strain DSM 2245B / Goettingen).